The chain runs to 256 residues: uncharacterized protein (256 aa).

An N-terminal signal peptide occupies residues 1 to 24 (MIKRVNKLVLGISLLFLVISITAG). The N-palmitoyl cysteine moiety is linked to residue C25. C25 carries the S-diacylglycerol cysteine lipid modification.

The protein belongs to the staphylococcal tandem lipoprotein family.

The protein localises to the cell membrane. This is an uncharacterized protein from Staphylococcus aureus (strain MW2).